A 668-amino-acid polypeptide reads, in one-letter code: MLHKAEGFDRRKFTMAGILVAMGVVYGDIGTSPLYVMKAIVGDNGGLARVSESFILGSVSLIFWTLTILTTIKYVVIALNADNHGEGGIFSLYTLVRKKSKYLIIPAMIGGAALLADGVLTPAVTVTTAIEGLRGIPAFFERFGNDQTIIVVITLTIILILFSVQRFGTELVGKAFGPIMFLWFTFLGIIGLMNFSQDWTVIRALNPYYALQLLVSPENKLGLFILGNIFLATTGAEALYSDLGHVGKMNIRISWPYIKICLILNYLGQAAWLLTVKENPEMQALAEINPFFQMIPRGILVFGVVFATIAAVIASQALISGSYTLVSEAIKLKLLPRLKIIYPGSNIGQMYIPAVNLILWLACSAIVLAFRTSTHMEAAYGLSITITMLMTTILLLFYLLDKIPAWSAYLISLFFAAIEVVFFFSSAAKFFHGGYVAVGMAVFLLCIMIIWERGNEIKEATAEQVSLKKYVPQLKALKEDTSVPMYQTNVVFLTSDRVDGEINRNIIYSILDKQPKRANVYWFVNVQVTDEPFTQEYSVDMLGTDFIVQVQLYLGFHISQEVNVYLRQIVHDLMKTGRLPKQPQRYSLTPGREVGDFQFVLIQEELSNVSELKKWDRQIMQAKLAIKNLTTSPESWFGLEYSEVKYESVPLIIGPQRKTHLVERKNRS.

12 consecutive transmembrane segments (helical) span residues 17 to 37, 59 to 79, 104 to 124, 148 to 168, 175 to 195, 221 to 241, 256 to 276, 299 to 319, 350 to 370, 380 to 400, 403 to 423, and 430 to 450; these read GILV…LYVM, VSLI…VIAL, IIPA…TPAV, TIIV…QRFG, AFGP…LMNF, LGLF…ALYS, PYIK…LLTV, ILVF…QALI, MYIP…VLAF, YGLS…FYLL, IPAW…VVFF, and FFHG…IMII.

The protein belongs to the HAK/KUP transporter (TC 2.A.72) family.

It localises to the cell membrane. The enzyme catalyses K(+)(in) + H(+)(in) = K(+)(out) + H(+)(out). Its function is as follows. Transport of potassium into the cell. Likely operates as a K(+):H(+) symporter. The polypeptide is Probable potassium transport system protein Kup (Enterococcus faecalis (strain ATCC 700802 / V583)).